A 23-amino-acid chain; its full sequence is Acidic phospholipase A2 Cvv-E6c (23 aa).

Ca(2+) is required as a cofactor. Post-translationally, contains 7 disulfide bonds. As to expression, expressed by the venom gland.

Its subcellular location is the secreted. It carries out the reaction a 1,2-diacyl-sn-glycero-3-phosphocholine + H2O = a 1-acyl-sn-glycero-3-phosphocholine + a fatty acid + H(+). Functionally, snake venom phospholipase A2 (PLA2) that significantly inhibits ADP-induced platelet aggregation in platelet-rich plasma of human, rabbit and guinea pig. PLA2 catalyzes the calcium-dependent hydrolysis of the 2-acyl groups in 3-sn-phosphoglycerides. This chain is Acidic phospholipase A2 Cvv-E6c, found in Crotalus viridis viridis (Prairie rattlesnake).